Consider the following 153-residue polypeptide: 17.3 kDa class I heat shock protein (153 aa).

Positions 39–153 (ENSAFVSTRV…PDVKAIDISG (115 aa)) constitute a sHSP domain.

Belongs to the small heat shock protein (HSP20) family. Forms oligomeric structures.

It localises to the cytoplasm. The polypeptide is 17.3 kDa class I heat shock protein (HSP17.3-B) (Glycine max (Soybean)).